Here is a 526-residue protein sequence, read N- to C-terminus: MSVQQQQVDLRRTFAIISHPDAGKTTITEKVLLFGQALQRAGTVKGKKSGQHAKSDWMEMEKERGISITTSVMQFPYNDCLVNLLDTPGHEDFSEDTYRTLTAVDSCLMVIDVAKGVEARTVKLMEVTRLRDTPIITFMNKMDRDVRDPMEVMDEVEEVLKIKCAAITWPIGMGKEFKGIYHILDDEITLYQSGLGHMIQEKRVIKGLNNPELDKIIGNYADDLREELELVSGASHDFNLEEFLKGELTPVFFGTALGNFGVDHMLDGLTKWAPKPLPRKTDLREVTAEEEKFSGFVFKIQANMDPKHRDRIAFMRICSGKYEKGMKMKQVRLAKDVKIADAVTFMAGDRSNVEEAFAGDIIGLHNHGSIQIGDTFTAGEMMKFSGIPNFAPEMFRRIRLRDPLKAKQLQKGLIQLSEEGAVQVFRPFINNDMIVGAVGVLQFEVVVQRLKTEYKVDAIYEAISVATARWCTCDDERTLEQFKKKSGDYLALDGGNNLTYIAPTMVNLSLAQERNPDIVFHSTREH.

The 269-residue stretch at 9-277 (DLRRTFAIIS…GLTKWAPKPL (269 aa)) folds into the tr-type G domain. GTP is bound by residues 18–25 (SHPDAGKT), 86–90 (DTPGH), and 140–143 (NKMD).

Belongs to the TRAFAC class translation factor GTPase superfamily. Classic translation factor GTPase family. PrfC subfamily.

It is found in the cytoplasm. In terms of biological role, increases the formation of ribosomal termination complexes and stimulates activities of RF-1 and RF-2. It binds guanine nucleotides and has strong preference for UGA stop codons. It may interact directly with the ribosome. The stimulation of RF-1 and RF-2 is significantly reduced by GTP and GDP, but not by GMP. The sequence is that of Peptide chain release factor 3 from Colwellia psychrerythraea (strain 34H / ATCC BAA-681) (Vibrio psychroerythus).